The primary structure comprises 540 residues: Membrane protein insertase YidC (540 aa).

A helical transmembrane segment spans residues Asn-6–Ala-26. Residues Gln-36–Ser-47 show a composition bias toward low complexity. Residues Gln-36 to Ala-63 form a disordered region. 4 helical membrane-spanning segments follow: residues Ala-342–Val-362, Leu-417–Leu-437, Leu-455–Ile-475, and Pro-496–Val-516.

This sequence belongs to the OXA1/ALB3/YidC family. Type 1 subfamily. As to quaternary structure, interacts with the Sec translocase complex via SecD. Specifically interacts with transmembrane segments of nascent integral membrane proteins during membrane integration.

The protein resides in the cell inner membrane. Functionally, required for the insertion and/or proper folding and/or complex formation of integral membrane proteins into the membrane. Involved in integration of membrane proteins that insert both dependently and independently of the Sec translocase complex, as well as at least some lipoproteins. Aids folding of multispanning membrane proteins. The protein is Membrane protein insertase YidC of Vibrio parahaemolyticus serotype O3:K6 (strain RIMD 2210633).